Consider the following 182-residue polypeptide: NADH-quinone oxidoreductase subunit B (182 aa).

Residues cysteine 61, cysteine 62, cysteine 126, and cysteine 156 each contribute to the [4Fe-4S] cluster site.

It belongs to the complex I 20 kDa subunit family. In terms of assembly, NDH-1 is composed of 14 different subunits. Subunits NuoB, C, D, E, F, and G constitute the peripheral sector of the complex. Requires [4Fe-4S] cluster as cofactor.

The protein resides in the cell inner membrane. It carries out the reaction a quinone + NADH + 5 H(+)(in) = a quinol + NAD(+) + 4 H(+)(out). NDH-1 shuttles electrons from NADH, via FMN and iron-sulfur (Fe-S) centers, to quinones in the respiratory chain. The immediate electron acceptor for the enzyme in this species is believed to be ubiquinone. Couples the redox reaction to proton translocation (for every two electrons transferred, four hydrogen ions are translocated across the cytoplasmic membrane), and thus conserves the redox energy in a proton gradient. The protein is NADH-quinone oxidoreductase subunit B of Xanthomonas oryzae pv. oryzae (strain PXO99A).